The following is a 356-amino-acid chain: Carbohydrate sulfotransferase 10 (356 aa).

Topologically, residues 1 to 6 (MHHQWL) are cytoplasmic. The helical; Signal-anchor for type II membrane protein transmembrane segment at 7-27 (LLAACFWVIFMFMVASKFITL) threads the bilayer. Residues 28 to 356 (TFKDPDVYSA…GYQKPDFLLN (329 aa)) lie on the Lumenal side of the membrane. A glycan (N-linked (GlcNAc...) asparagine) is linked at N99. 3'-phosphoadenylyl sulfate is bound by residues 127-133 (PKVGNTQ) and 189-197 (RDPFERLIS). N-linked (GlcNAc...) asparagine glycosylation is found at N228 and N316.

Belongs to the sulfotransferase 2 family.

Its subcellular location is the golgi apparatus membrane. The enzyme catalyses 3-O-{beta-D-GlcA-(1-&gt;[3)-alpha-D-Xyl-(1-&gt;3)-beta-D-GlcA-(1-&gt;](n)-4)-beta-D-Xyl-(1-&gt;4)-Rib-ol-P-Rib-ol-P-3-beta-D-GalNAc-(1-&gt;3)-beta-D-GlcNAc-(1-&gt;4)-O-6-P-alpha-D-Man}-L-Thr-[protein] + 3'-phosphoadenylyl sulfate = 3-O-{O-3-S-beta-D-GlcA-(1-&gt;[3)-alpha-D-Xyl-(1-&gt;3)-beta-D-GlcA-(1-&gt;](n)-4)-beta-D-Xyl-(1-&gt;4)-Rib-ol-P-Rib-ol-P-3-beta-D-GalNAc-(1-&gt;3)-beta-D-GlcNAc-(1-&gt;4)-O-6-P-alpha-D-Man}-L-Thr-[protein] + adenosine 3',5'-bisphosphate + H(+). The catalysed reaction is 17beta-estradiol 3-O-(beta-D-glucuronate) + 3'-phosphoadenylyl sulfate = 17beta-estradiol 3-O-(3-sulfo-beta-D-glucuronate) + adenosine 3',5'-bisphosphate + H(+). It carries out the reaction 17beta-estradiol 3-O-(beta-D-glucuronate) 17-sulfate + 3'-phosphoadenylyl sulfate = 17beta-estradiol 3-O-(3-sulfo-beta-D-glucuronate) 17-sulfate + adenosine 3',5'-bisphosphate + H(+). It catalyses the reaction 17beta-estradiol 17-O-(beta-D-glucuronate) + 3'-phosphoadenylyl sulfate = 17beta-estradiol 17-O-(3-sulfo-beta-D-glucuronate) + adenosine 3',5'-bisphosphate + H(+). The enzyme catalyses 16alpha,17beta-estriol 3-O-(beta-D-glucuronate) + 3'-phosphoadenylyl sulfate = 16alpha,17beta-estriol 3-O-(3-sulfo-beta-D-glucuronate) + adenosine 3',5'-bisphosphate + H(+). The catalysed reaction is 16alpha,17beta-estriol 16-O-(beta-D-glucuronate) + 3'-phosphoadenylyl sulfate = 16alpha,17beta-estriol 16-O-(3-sulfo-beta-D-glucuronate) + adenosine 3',5'-bisphosphate + H(+). It carries out the reaction 16alpha,17beta-estriol 17-O-(beta-D-glucuronate) + 3'-phosphoadenylyl sulfate = 16alpha,17beta-estriol 17-O-(3-sulfo-beta-D-glucuronate) + adenosine 3',5'-bisphosphate + H(+). It catalyses the reaction estrone 3-O-(beta-D-glucuronate) + 3'-phosphoadenylyl sulfate = estrone 3-O-(3-sulfo-beta-D-glucuronate) + adenosine 3',5'-bisphosphate + H(+). The enzyme catalyses 3alpha,20alpha-dihydroxy-5beta-pregnane 3-O-(beta-D-glucuronate) + 3'-phosphoadenylyl sulfate = 3alpha,20alpha-dihydroxy-5beta-pregnane 3-O-(3-sulfo-beta-D-glucuronate) + adenosine 3',5'-bisphosphate + H(+). The catalysed reaction is testosterone 17-O-(beta-D-glucuronate) + 3'-phosphoadenylyl sulfate = testosterone 17-O-(3-sulfo-beta-D-glucuronate) + adenosine 3',5'-bisphosphate + H(+). It carries out the reaction 3beta-androst-5-en-17-one 3-O-(beta-D-glucuronate) + 3'-phosphoadenylyl sulfate = 3beta-androst-5-en-17-one 3-O-(3-sulfo-beta-D-glucuronate) + adenosine 3',5'-bisphosphate + H(+). It catalyses the reaction 3alpha,17alpha-dihydroxy-5beta-androstane-11-one-17beta-carboxylate 3-O-(beta-D-glucuronate) + 3'-phosphoadenylyl sulfate = 3alpha,17alpha-dihydroxy-5beta-androstane-11-one-17beta-carboxylate 3-O-(3-sulfo-beta-D-glucuronate) + adenosine 3',5'-bisphosphate + H(+). The enzyme catalyses 3alpha-hydroxyetiocholan-17-one 3-O-(beta-D-glucuronate) + 3'-phosphoadenylyl sulfate = 3alpha-hydroxyetiocholan-17-one 3-O-(3-sulfo-beta-D-glucuronate) + adenosine 3',5'-bisphosphate + H(+). It functions in the pathway steroid metabolism. Its pathway is protein modification; carbohydrate sulfation. In terms of biological role, catalyzes the transfer of sulfate from 3'-phosphoadenylyl sulfate (PAPS) to position 3 of terminal glucuronic acid of both protein- and lipid-linked oligosaccharides. Participates in biosynthesis of HNK-1 carbohydrate structure 3-O-sulfo-beta-D-GlcA-(1-&gt;3)-beta-D-Gal-(1-&gt;4)-D-GlcNAc-R, a sulfated glucuronyl-lactosaminyl residue carried by many neural recognition molecules, which is involved in cell interactions during ontogenetic development and in synaptic plasticity in the adult. May be indirectly involved in synapse plasticity of the hippocampus, via its role in HNK-1 biosynthesis. Sulfates terminal glucuronyl residue of the laminin globular (LG)-domain binding epitope on DAG1/alpha-dystroglycan and prevents further polymerization by LARGE1 glycosyltransferase. Likely defines the chain length of LG epitope, conferring binding specificity to extracellular matrix components. Plays a role in down-regulating the steroid hormones. Sulfates glucuronidated estrogens and androgens with an impact in hormone cycle and fertility. Has a preference for glucuronyl moiety at the 3-hydroxyl group of a sterol ring rather than the 17-hydroxyl group, showing high catalytic efficiency for 17beta-estradiol 3-O-(beta-D-glucuronate) and dehydroepiandrosterone 3-O-(beta-D-glucuronate) hormones. The polypeptide is Carbohydrate sulfotransferase 10 (CHST10) (Pongo abelii (Sumatran orangutan)).